The primary structure comprises 152 residues: Lipoprotein signal peptidase (152 aa).

Helical transmembrane passes span 5–25, 61–81, and 84–104; these read LFVL…FWIV, WFFV…LATH, and LNIW…GNFI. Residues Asp114 and Asp130 contribute to the active site. Residues 125–145 traverse the membrane as a helical segment; the sequence is IFNVADSYLTVGVILLVICLW.

Belongs to the peptidase A8 family.

It is found in the cell membrane. It carries out the reaction Release of signal peptides from bacterial membrane prolipoproteins. Hydrolyzes -Xaa-Yaa-Zaa-|-(S,diacylglyceryl)Cys-, in which Xaa is hydrophobic (preferably Leu), and Yaa (Ala or Ser) and Zaa (Gly or Ala) have small, neutral side chains.. It participates in protein modification; lipoprotein biosynthesis (signal peptide cleavage). Its function is as follows. This protein specifically catalyzes the removal of signal peptides from prolipoproteins. In Streptococcus pyogenes serotype M18 (strain MGAS8232), this protein is Lipoprotein signal peptidase.